The chain runs to 94 residues: Co-chaperonin GroES (94 aa).

Residues 17-53 (DSNPNSPIQLPDSAKKKPTKGKVVSVGPGASNSDGKV) are disordered.

It belongs to the GroES chaperonin family. As to quaternary structure, heptamer of 7 subunits arranged in a ring. Interacts with the chaperonin GroEL.

The protein resides in the cytoplasm. In terms of biological role, together with the chaperonin GroEL, plays an essential role in assisting protein folding. The GroEL-GroES system forms a nano-cage that allows encapsulation of the non-native substrate proteins and provides a physical environment optimized to promote and accelerate protein folding. GroES binds to the apical surface of the GroEL ring, thereby capping the opening of the GroEL channel. The sequence is that of Co-chaperonin GroES from Anaplasma phagocytophilum (strain HZ).